The chain runs to 1220 residues: Plasma membrane calcium-transporting ATPase 1 (1220 aa).

N-acetylglycine is present on Gly-2. The Cytoplasmic segment spans residues 2 to 105; the sequence is GDMANNSVAY…KTFLQLVWEA (104 aa). Phosphoserine is present on residues Ser-8 and Ser-17. A helical transmembrane segment spans residues 106-126; it reads LQDVTLIILEIAAIVSLGLSF. Topologically, residues 127 to 154 are extracellular; the sequence is YQPPEGDNALCGEVSVGEEEGEGETGWI. A helical membrane pass occupies residues 155–175; the sequence is EGAAILLSVVCVVLVTAFNDW. Residues 176 to 366 lie on the Cytoplasmic side of the membrane; sequence SKEKQFRGLQ…KEKSVLQGKL (191 aa). The segment at 297–356 is disordered; it reads EEEKKDEKKKEKKNKKQDGAIENRNKAKAQDGAAMEMQPLKSEEGGDGDEKDKKKANLPK. Basic and acidic residues-rich tracts occupy residues 312–325 and 337–356; these read KQDGAIENRNKAKA and KSEEGGDGDEKDKKKANLPK. Phosphoserine is present on Ser-338. The chain crosses the membrane as a helical span at residues 367-386; that stretch reads TKLAVQIGKAGLLMSAITVI. Residues 387–418 lie on the Extracellular side of the membrane; the sequence is ILVLYFVIDTFWVQKRPWLAECTPIYIQYFVK. Residues 419–439 traverse the membrane as a helical segment; the sequence is FFIIGVTVLVVAVPEGLPLAV. Over 440 to 855 the chain is Cytoplasmic; the sequence is TISLAYSVKK…RNVYDSISKF (416 aa). The active-site 4-aspartylphosphate intermediate is the Asp-475. Asp-475, Thr-477, and Asp-797 together coordinate Mg(2+). The helical transmembrane segment at 856 to 876 threads the bilayer; it reads LQFQLTVNVVAVIVAFTGACI. Residues 877–882 are Extracellular-facing; sequence TQDSPL. A helical membrane pass occupies residues 883-903; the sequence is KAVQMLWVNLIMDTLASLALA. The Cytoplasmic segment spans residues 904 to 927; the sequence is TEPPTESLLLRKPYGRNKPLISRT. Residues 928–948 form a helical membrane-spanning segment; the sequence is MMKNILGHAFYQLVVVFTLLF. Residues 949–971 are Extracellular-facing; the sequence is AGEKFFDIDSGRNAPLHAPPSEH. A helical transmembrane segment spans residues 972–991; the sequence is YTIVFNTFVLMQLFNEINAR. Over 992–1005 the chain is Cytoplasmic; the sequence is KIHGERNVFEGIFN. The helical transmembrane segment at 1006 to 1027 threads the bilayer; sequence NAIFCTIVLGTFVVQIIIVQFG. The Extracellular segment spans residues 1028-1039; that stretch reads GKPFSCSELSIE. The helical transmembrane segment at 1040-1060 threads the bilayer; the sequence is QWLWSIFLGMGTLLWGQLIST. Topologically, residues 1061-1220 are cytoplasmic; the sequence is IPTSRLKFLK…SPLHSLETSL (160 aa). Residues 1100–1117 are calmodulin-binding subdomain A; the sequence is LRRGQILWFRGLNRIQTQ. Thr-1116 carries the post-translational modification Phosphothreonine; by PKC. Positions 1118 to 1220 are required for basolateral membrane targeting; sequence IRVVNAFRSS…SPLHSLETSL (103 aa). Phosphoserine is present on residues Ser-1140 and Ser-1155. The disordered stretch occupies residues 1162-1220; the sequence is IDDTDAEDDAPTKRNSSPPPSPNKNNNAVDSGIHLTIEMNKSATSSSPGSPLHSLETSL. Thr-1165 is subject to Phosphothreonine. Position 1177 is a phosphoserine; by PKA (Ser-1177). Ser-1178 and Ser-1182 each carry phosphoserine. Polar residues predominate over residues 1200-1220; it reads MNKSATSSSPGSPLHSLETSL.

The protein belongs to the cation transport ATPase (P-type) (TC 3.A.3) family. Type IIB subfamily. Monomer. Dimer. Oligomer. Calmodulin binding. Interacts with PDZD11. Interacts with SLC35G1 and STIM1. Interacts with YWHAE; interacts with the monomeric and dimeric forms of the YWHAE but prefer the monomer form; this interaction inhibits calcium-transporting ATPase activity. Interacts with NPTN; this interaction stabilizes ATP2B1 and increases ATPase activity; this interaction controls T cell calcium homeostasis following T cell activation. Interacts with EPB41; regulates small intestinal calcium absorption through regulation of membrane expression of ATP2B1. Isoform B is ubiquitously expressed. Isoforms A and E have only been found in brain cortex. Isoform C is found in brain cortex, skeletal muscle and heart muscle. Isoform D has only been found in fetal skeletal muscle. Isoform K has been found in small intestine and liver. Isoform B is expressed in hair cells of inner ear.

It localises to the cell membrane. It is found in the basolateral cell membrane. The protein localises to the synapse. Its subcellular location is the presynaptic cell membrane. The protein resides in the cytoplasmic vesicle. It localises to the secretory vesicle. It is found in the synaptic vesicle membrane. It carries out the reaction Ca(2+)(in) + ATP + H2O = Ca(2+)(out) + ADP + phosphate + H(+). Functionally, catalyzes the hydrolysis of ATP coupled with the transport of calcium from the cytoplasm to the extracellular space thereby maintaining intracellular calcium homeostasis. Plays a role in blood pressure regulation through regulation of intracellular calcium concentration and nitric oxide production leading to regulation of vascular smooth muscle cells vasoconstriction. Positively regulates bone mineralization through absorption of calcium from the intestine. Plays dual roles in osteoclast differentiation and survival by regulating RANKL-induced calcium oscillations in preosteoclasts and mediating calcium extrusion in mature osteoclasts. Regulates insulin sensitivity through calcium/calmodulin signaling pathway by regulating AKT1 activation and NOS3 activation in endothelial cells. May play a role in synaptic transmission by modulating calcium and proton dynamics at the synaptic vesicles. The protein is Plasma membrane calcium-transporting ATPase 1 of Rattus norvegicus (Rat).